A 290-amino-acid chain; its full sequence is S-adenosylmethionine-dependent nucleotide dehydratase (290 aa).

Positions 6-226 (SGNNIIPSVN…VNRHSKNKFL (221 aa)) constitute a Radical SAM core domain. Cys-22, Cys-26, and Cys-29 together coordinate [4Fe-4S] cluster.

Belongs to the radical SAM superfamily. Viperin family. The cofactor is [4Fe-4S] cluster.

It carries out the reaction UTP + AH2 + S-adenosyl-L-methionine = 3'-deoxy-3',4'-didehydro-UTP + 5'-deoxyadenosine + L-methionine + A + H2O + H(+). In terms of biological role, expression of pVip47 in E.coli (strain MG1655) confers resistance to phage P1; has no effect against T7. Catalyzes the conversion of uridine triphosphate (UTP) to 3'-deoxy-3',4'-didehydro-UTP (ddhUTP), probably via a SAM-dependent radical mechanism. The modified nucleotide represses transcription from T7 RNA polymerase-directed genes (possibly by acting as chain terminators), strongly suggesting these nucleotides block viral polymerase transcription. How this protein allows bacteria to resist viruses that do not encode their own RNA polymerase (such as lambda, P1) is unknown. The sequence is that of S-adenosylmethionine-dependent nucleotide dehydratase from Flammeovirga pacifica.